We begin with the raw amino-acid sequence, 372 residues long: MPLPDFHVSEPFTLGIELEMQVVNPPGYDLSQDSSMLIDTVKNQITAGEVKHDITESMLELATDVCRDINQAAGQFSAMQKVVLQAAADHHLEICGGGTHPFQKWQRQEVCDNERYQRTLENFGYLIQQATVFGQHVHVGCASGDDAIYLLHGLSRFVPHFIALSAASPYMQGTDTRFASSRPNIFSAFPDNGPMPWVSNWQQFEALFRCLSYTTMIDSIKDLHWDIRPSPHFGTVEVRVMDTPLTLSHAVNMAGLIQATAHWLLTERPFKHQEKDYLMYKFNRFQACRYGLEGVITDPHTGDRRSLTEATLRLLEKIAPSAHKIGASSAIEALHRQVVSGLNEAQLMRDFVADGGSLIGLVKKHCEIWAGE.

This sequence belongs to the glutamate--cysteine ligase type 2 family. YbdK subfamily. In terms of assembly, homodimer.

The enzyme catalyses L-cysteine + L-glutamate + ATP = gamma-L-glutamyl-L-cysteine + ADP + phosphate + H(+). Its function is as follows. ATP-dependent carboxylate-amine ligase which exhibits weak glutamate--cysteine ligase activity. In Escherichia coli O81 (strain ED1a), this protein is Putative glutamate--cysteine ligase 2 (ybdK).